The primary structure comprises 199 residues: Small ribosomal subunit protein mS38 (199 aa).

This sequence belongs to the mitochondrion-specific ribosomal protein mS38 family. In terms of assembly, component of the mitochondrial small ribosomal subunit (mt-SSU). Mature mammalian 55S mitochondrial ribosomes consist of a small (28S) and a large (39S) subunit. The 28S small subunit contains a 12S ribosomal RNA (12S mt-rRNA) and 30 different proteins. The 39S large subunit contains a 16S rRNA (16S mt-rRNA), a copy of mitochondrial valine transfer RNA (mt-tRNA(Val)), which plays an integral structural role, and 52 different proteins. Interacts with Aurora-A. Ubiquitously expressed and especially highly expressed in heart, skeletal muscle and testis.

Its subcellular location is the mitochondrion matrix. The protein localises to the nucleus. Functionally, may act as a negative regulator of Aurora-A kinase, by down-regulation through proteasome-dependent degradation. The polypeptide is Small ribosomal subunit protein mS38 (AURKAIP1) (Homo sapiens (Human)).